A 505-amino-acid polypeptide reads, in one-letter code: MTEQIPAPQPPADENSLIAERRAKLGALRGQGIAYPNDFVREHFAGDLQAEFADADTWTPDALEASGRTVKMAGRLMAKRVMGKASFAQIQDESGRVQLFLQGNVLGDAYTAFKGWDVGDIVAVEGGLTRTKTGELSVKASALRLLTKSLRPLPDKWHGLSDVEQRYRQRYVDLIVTPEAREVFIKRSKIIRAMRAWLDARRFLEVETPMMHYIPGGATAKPFTTHHNALDLDLYLRVAPELYLKRLVVGGLERVYEINRNFRNEGVSTRHNPEFTMLELYEAYATYHEIMDLTEQVIRDTAQSVLGTTQVSWDGADIDLAPAFRRWRMDEAVRHHNPEISAADCTDRDALLRHCERLKIRVKPSYGWGKLLLEIFEATVEHTLVQPTFITDHPVEVSPLARSSDTEPGYTDRFELFINGKELANGFSELNDPEDQAARFQAQVQAKDGGDDEAMHFDADYIRALEYGMPPTGGLGIGIDRLVMLLTGSTSIRDVLLFPYMRPEA.

Mg(2+)-binding residues include E415 and E422.

This sequence belongs to the class-II aminoacyl-tRNA synthetase family. In terms of assembly, homodimer. The cofactor is Mg(2+).

It is found in the cytoplasm. It catalyses the reaction tRNA(Lys) + L-lysine + ATP = L-lysyl-tRNA(Lys) + AMP + diphosphate. The chain is Lysine--tRNA ligase from Xanthomonas oryzae pv. oryzae (strain MAFF 311018).